A 94-amino-acid polypeptide reads, in one-letter code: Defensin-7 (94 aa).

Positions 1-19 (MRTLTLLSAFLLVALQAWA) are cleaved as a signal peptide. Intrachain disulfides connect Cys65/Cys93 and Cys72/Cys92.

Belongs to the alpha-defensin family.

It localises to the secreted. In terms of biological role, has antimicrobial activity. In Pan troglodytes (Chimpanzee), this protein is Defensin-7 (DEFA7).